Consider the following 252-residue polypeptide: Transmembrane ascorbate-dependent reductase CYB561 (252 aa).

Met-1 is subject to N-acetylmethionine. Residues 1–17 lie on the Cytoplasmic side of the membrane; it reads MESPAGRTPAPGALPYY. Residues 18 to 38 traverse the membrane as a helical segment; it reads VAFSQLLGLTVVAVTGAWLGA. The Cytochrome b561 domain occupies 20–221; that stretch reads FSQLLGLTVV…FGAVVLYILT (202 aa). Over 39–52 the chain is Vesicular; sequence YRGGIAWESALQFN. A helical membrane pass occupies residues 53–73; the sequence is VHPLCMIIGLVFLQGDALLVY. The heme b site is built by His-54, Arg-74, and Lys-81. The Cytoplasmic portion of the chain corresponds to 74–85; it reads RVFRNEAKRTTK. L-ascorbate contacts are provided by Lys-81 and Lys-85. The chain crosses the membrane as a helical span at residues 86 to 106; sequence ILHGLLHVLAFVIALVGLVAV. Heme b contacts are provided by residues His-88, 117–120, and His-122; that span reads DLYS. The Vesicular segment spans residues 107 to 125; it reads FDYHRKKGIADLYSLHSWC. Residues 126–146 form a helical membrane-spanning segment; it reads GILVFVLFLAQWLVGLGFFLF. The Cytoplasmic segment spans residues 147–159; it reads PGASFSLRSRYRP. Arg-154 is an L-ascorbate binding site. Residues 160–180 traverse the membrane as a helical segment; the sequence is QHVFFGAAIFLLSVGTALLGL. 2 residues coordinate heme b: His-161 and Glu-182. Residues 181-199 lie on the Vesicular side of the membrane; it reads KEALLFQLGTKYSAFESEG. A helical transmembrane segment spans residues 200–220; that stretch reads VLANVLGLLLVAFGAVVLYIL. At 221–252 the chain is on the cytoplasmic side; that stretch reads TRADWKRPLQAEEQALSMDFKTLTEGDSPSSQ. Lys-226 is a binding site for heme b. Ser-248 and Ser-250 each carry phosphoserine.

It depends on heme b as a cofactor.

The protein localises to the cytoplasmic vesicle. Its subcellular location is the secretory vesicle. The protein resides in the chromaffin granule membrane. The catalysed reaction is monodehydro-L-ascorbate radical(out) + L-ascorbate(in) = monodehydro-L-ascorbate radical(in) + L-ascorbate(out). Its function is as follows. Transmembrane reductase that uses ascorbate as an electron donor in the cytoplasm and transfers electrons across membranes to reduce monodehydro-L-ascorbate radical in the lumen of secretory vesicles. It is therefore involved the regeneration and homeostasis within secretory vesicles of ascorbate which in turn provides reducing equivalents needed to support the activity of intravesicular enzymes. The sequence is that of Transmembrane ascorbate-dependent reductase CYB561 (CYB561) from Sus scrofa (Pig).